The sequence spans 283 residues: Bifunctional protein FolD (283 aa).

NADP(+) contacts are provided by residues 166-168 (GAS) and isoleucine 232.

This sequence belongs to the tetrahydrofolate dehydrogenase/cyclohydrolase family. As to quaternary structure, homodimer.

It carries out the reaction (6R)-5,10-methylene-5,6,7,8-tetrahydrofolate + NADP(+) = (6R)-5,10-methenyltetrahydrofolate + NADPH. The catalysed reaction is (6R)-5,10-methenyltetrahydrofolate + H2O = (6R)-10-formyltetrahydrofolate + H(+). The protein operates within one-carbon metabolism; tetrahydrofolate interconversion. Catalyzes the oxidation of 5,10-methylenetetrahydrofolate to 5,10-methenyltetrahydrofolate and then the hydrolysis of 5,10-methenyltetrahydrofolate to 10-formyltetrahydrofolate. The chain is Bifunctional protein FolD from Wigglesworthia glossinidia brevipalpis.